Consider the following 259-residue polypeptide: Polycomb group RING finger protein 1 (259 aa).

An RING-type zinc finger spans residues Cys45–Asn84.

Component of a PRC1-like complex.

Its subcellular location is the nucleus. Component of a Polycomb group (PcG) multiprotein PRC1-like complex, a complex class required to maintain the transcriptionally repressive state of many genes, including Hox genes, throughout development. PcG PRC1 complex acts via chromatin remodeling and modification of histones; it mediates monoubiquitination of histone H2A 'Lys-119', rendering chromatin heritably changed in its expressibility. This is Polycomb group RING finger protein 1 (pcgf1) from Xenopus tropicalis (Western clawed frog).